Consider the following 168-residue polypeptide: 2-C-methyl-D-erythritol 2,4-cyclodiphosphate synthase (168 aa).

Residues aspartate 11 and histidine 13 each contribute to the a divalent metal cation site. Residues 11–13 (DVH) and 41–42 (HS) each bind 4-CDP-2-C-methyl-D-erythritol 2-phosphate. An a divalent metal cation-binding site is contributed by histidine 49. 4-CDP-2-C-methyl-D-erythritol 2-phosphate is bound by residues 63–65 (DIG), 68–72 (FPDTD), 139–142 (TTTE), phenylalanine 146, and arginine 149.

Belongs to the IspF family. As to quaternary structure, homotrimer. It depends on a divalent metal cation as a cofactor.

It carries out the reaction 4-CDP-2-C-methyl-D-erythritol 2-phosphate = 2-C-methyl-D-erythritol 2,4-cyclic diphosphate + CMP. Its pathway is isoprenoid biosynthesis; isopentenyl diphosphate biosynthesis via DXP pathway; isopentenyl diphosphate from 1-deoxy-D-xylulose 5-phosphate: step 4/6. Its function is as follows. Involved in the biosynthesis of isopentenyl diphosphate (IPP) and dimethylallyl diphosphate (DMAPP), two major building blocks of isoprenoid compounds. Catalyzes the conversion of 4-diphosphocytidyl-2-C-methyl-D-erythritol 2-phosphate (CDP-ME2P) to 2-C-methyl-D-erythritol 2,4-cyclodiphosphate (ME-CPP) with a corresponding release of cytidine 5-monophosphate (CMP). This Psychrobacter arcticus (strain DSM 17307 / VKM B-2377 / 273-4) protein is 2-C-methyl-D-erythritol 2,4-cyclodiphosphate synthase.